Here is a 198-residue protein sequence, read N- to C-terminus: Putative coiled-coil domain-containing protein 196 (198 aa).

Residues 24–117 are a coiled coil; sequence NYLKELNEDL…RKEMEMLWNK (94 aa). Basic and acidic residues-rich tracts occupy residues 135–144 and 154–167; these read NKTDLQDGKA and TKNE…EKGK. The tract at residues 135–198 is disordered; sequence NKTDLQDGKA…VSGTSQHHSE (64 aa). Residues 187 to 198 are compositionally biased toward polar residues; the sequence is GQVSGTSQHHSE.

This Bos taurus (Bovine) protein is Putative coiled-coil domain-containing protein 196.